We begin with the raw amino-acid sequence, 217 residues long: GTPase IMAP family member GIMD1 (217 aa).

The AIG1-type G domain maps to 6 to 217 (KMIINLAVFG…ENHFQVLSLA (212 aa)). GTP-binding positions include 15–23 (GRTQSGKSS), Ser-36, and 148–150 (HAE).

This sequence belongs to the TRAFAC class TrmE-Era-EngA-EngB-Septin-like GTPase superfamily. AIG1/Toc34/Toc159-like paraseptin GTPase family. IAN subfamily.

The protein is GTPase IMAP family member GIMD1 (Gimd1) of Mus musculus (Mouse).